A 224-amino-acid chain; its full sequence is Ornithine decarboxylase antizyme (224 aa).

It belongs to the ODC antizyme family. As to quaternary structure, interacts with ODC and thereby sterically blocks ODC homodimerization.

In terms of biological role, ornithine decarboxylase (ODC) antizyme protein that negatively regulates ODC activity and intracellular polyamine biosynthesis in response to increased intracellular polyamine levels. Binds to ODC monomers, inhibiting the assembly of the functional ODC homodimer, and targets the monomers for ubiquitin-independent proteolytic destruction by the 26S proteasome. This Schizosaccharomyces octosporus (Fission yeast) protein is Ornithine decarboxylase antizyme (spa1).